Consider the following 452-residue polypeptide: Tripartite motif-containing protein 51G (452 aa).

The RING-type zinc finger occupies 15-56 (CPICMNYFIDPVTIDCGHSFCRPCFYLNWQDMAVLAQCSKCK). A B box-type zinc finger spans residues 88-129 (SEEQICGTHRETKEMFCEVDKSLLCLLCSNSQEHRNHRHCPT). Residues Cys93, His96, Cys115, and His121 each coordinate Zn(2+). The 184-residue stretch at 269–452 (EFSAGPIIGL…LWPIICCSHF (184 aa)) folds into the B30.2/SPRY domain.

It belongs to the TRIM/RBCC family.

This Homo sapiens (Human) protein is Tripartite motif-containing protein 51G.